The primary structure comprises 141 residues: Cystatin-S (141 aa).

Positions 1–20 (MARPLCTLLLLMATLAGALA) are cleaved as a signal peptide. Phosphoserine occurs at positions 21 and 23. The short motif at 76 to 80 (QTFGG) is the Secondary area of contact element. 2 disulfides stabilise this stretch: C94-C104 and C118-C138.

The protein belongs to the cystatin family. Phosphorylated at both its N- and C-terminal regions. In terms of tissue distribution, expressed in submandibular and sublingual saliva but not in parotid saliva (at protein level). Expressed in saliva, tears, urine and seminal fluid.

It localises to the secreted. In terms of biological role, this protein strongly inhibits papain and ficin, partially inhibits stem bromelain and bovine cathepsin C, but does not inhibit porcine cathepsin B or clostripain. Papain is inhibited non-competitively. The chain is Cystatin-S (CST4) from Homo sapiens (Human).